The sequence spans 576 residues: Sulfite reductase [NADPH] hemoprotein beta-component (576 aa).

Residues Cys434, Cys440, Cys479, and Cys483 each coordinate [4Fe-4S] cluster. Residue Cys483 participates in siroheme binding.

The protein belongs to the nitrite and sulfite reductase 4Fe-4S domain family. In terms of assembly, alpha(8)-beta(8). The alpha component is a flavoprotein, the beta component is a hemoprotein. Requires siroheme as cofactor. It depends on [4Fe-4S] cluster as a cofactor.

It catalyses the reaction hydrogen sulfide + 3 NADP(+) + 3 H2O = sulfite + 3 NADPH + 4 H(+). Its pathway is sulfur metabolism; hydrogen sulfide biosynthesis; hydrogen sulfide from sulfite (NADPH route): step 1/1. Its function is as follows. Component of the sulfite reductase complex that catalyzes the 6-electron reduction of sulfite to sulfide. This is one of several activities required for the biosynthesis of L-cysteine from sulfate. The protein is Sulfite reductase [NADPH] hemoprotein beta-component of Oceanobacillus iheyensis (strain DSM 14371 / CIP 107618 / JCM 11309 / KCTC 3954 / HTE831).